The chain runs to 80 residues: Trefoil factor 3 (80 aa).

The first 23 residues, 1–23 (MEARVLWLLVVVLVLGSSSLAVA), serve as a signal peptide directing secretion. The region spanning 30-73 (NLCEVPPKDRVDCGYPEITSEQCVNRGCCFDSSIHGVPWCFKPL) is the P-type domain. 3 disulfides stabilise this stretch: Cys32–Cys58, Cys42–Cys57, and Cys52–Cys69.

In terms of assembly, monomer. Homodimer; disulfide-linked.

Its subcellular location is the secreted. The protein localises to the extracellular space. The protein resides in the extracellular matrix. It localises to the cytoplasm. In terms of biological role, involved in the maintenance and repair of the intestinal mucosa. Promotes the mobility of epithelial cells in healing processes (motogen). The protein is Trefoil factor 3 (TFF3) of Canis lupus familiaris (Dog).